Consider the following 878-residue polypeptide: Alanine--tRNA ligase (878 aa).

The Zn(2+) site is built by histidine 562, histidine 566, cysteine 670, and histidine 674.

It belongs to the class-II aminoacyl-tRNA synthetase family. Requires Zn(2+) as cofactor.

It is found in the cytoplasm. The enzyme catalyses tRNA(Ala) + L-alanine + ATP = L-alanyl-tRNA(Ala) + AMP + diphosphate. In terms of biological role, catalyzes the attachment of alanine to tRNA(Ala) in a two-step reaction: alanine is first activated by ATP to form Ala-AMP and then transferred to the acceptor end of tRNA(Ala). Also edits incorrectly charged Ser-tRNA(Ala) and Gly-tRNA(Ala) via its editing domain. The chain is Alanine--tRNA ligase from Acinetobacter baylyi (strain ATCC 33305 / BD413 / ADP1).